We begin with the raw amino-acid sequence, 431 residues long: Sorting nexin-31 (431 aa).

The region spanning 1–107 (MHICIPVTEE…DYFRKLQMDT (107 aa)) is the PX domain.

It belongs to the sorting nexin family.

Its function is as follows. May be involved in protein trafficking. The protein is Sorting nexin-31 (snx31) of Xenopus laevis (African clawed frog).